The primary structure comprises 697 residues: Elongation factor G (697 aa).

The 276-residue stretch at 8–283 (ERCRNIGIMA…AVVDYLPSPL (276 aa)) folds into the tr-type G domain. GTP-binding positions include 17-24 (AHIDAGKT), 81-85 (DTPGH), and 135-138 (NKID).

This sequence belongs to the TRAFAC class translation factor GTPase superfamily. Classic translation factor GTPase family. EF-G/EF-2 subfamily.

It localises to the cytoplasm. Its function is as follows. Catalyzes the GTP-dependent ribosomal translocation step during translation elongation. During this step, the ribosome changes from the pre-translocational (PRE) to the post-translocational (POST) state as the newly formed A-site-bound peptidyl-tRNA and P-site-bound deacylated tRNA move to the P and E sites, respectively. Catalyzes the coordinated movement of the two tRNA molecules, the mRNA and conformational changes in the ribosome. The sequence is that of Elongation factor G from Koribacter versatilis (strain Ellin345).